Consider the following 460-residue polypeptide: Cysteine--tRNA ligase (460 aa).

Cys29 serves as a coordination point for Zn(2+). The 'HIGH' region motif lies at Met31–His41. Cys210, His235, and Glu239 together coordinate Zn(2+). The short motif at Lys267–Ser271 is the 'KMSKS' region element. Lys270 is an ATP binding site.

It belongs to the class-I aminoacyl-tRNA synthetase family. As to quaternary structure, monomer. Requires Zn(2+) as cofactor.

The protein localises to the cytoplasm. The catalysed reaction is tRNA(Cys) + L-cysteine + ATP = L-cysteinyl-tRNA(Cys) + AMP + diphosphate. The sequence is that of Cysteine--tRNA ligase from Coxiella burnetii (strain RSA 493 / Nine Mile phase I).